Here is a 121-residue protein sequence, read N- to C-terminus: NAD(P)H-quinone oxidoreductase subunit 3, chloroplastic (121 aa).

Transmembrane regions (helical) follow at residues 10 to 30 (FFIFLLLASVIPILAFSISKF), 65 to 85 (MFALVFVIFDVETVFLYPWAM), and 90 to 110 (LGLSAFIEALVFVFILIIGLV).

Belongs to the complex I subunit 3 family. As to quaternary structure, NDH is composed of at least 16 different subunits, 5 of which are encoded in the nucleus.

Its subcellular location is the plastid. The protein resides in the chloroplast thylakoid membrane. The catalysed reaction is a plastoquinone + NADH + (n+1) H(+)(in) = a plastoquinol + NAD(+) + n H(+)(out). It carries out the reaction a plastoquinone + NADPH + (n+1) H(+)(in) = a plastoquinol + NADP(+) + n H(+)(out). In terms of biological role, NDH shuttles electrons from NAD(P)H:plastoquinone, via FMN and iron-sulfur (Fe-S) centers, to quinones in the photosynthetic chain and possibly in a chloroplast respiratory chain. The immediate electron acceptor for the enzyme in this species is believed to be plastoquinone. Couples the redox reaction to proton translocation, and thus conserves the redox energy in a proton gradient. The sequence is that of NAD(P)H-quinone oxidoreductase subunit 3, chloroplastic from Physcomitrium patens (Spreading-leaved earth moss).